The primary structure comprises 386 residues: Patatin-07 (386 aa).

Residues 1–23 (MATTKSFLILFFMILATTSSTCA) form the signal peptide. The PNPLA domain maps to 32-229 (LSIDGGGIKG…TVADPALLSV (198 aa)). Positions 36 to 41 (GGGIKG) match the GXGXXG motif. The GXSXG motif lies at 75-79 (GTSTG). The active-site Nucleophile is the S77. N115 and N202 each carry an N-linked (GlcNAc...) asparagine glycan. The active-site Proton acceptor is D215. The DGA/G motif lies at 215–217 (DGA).

The protein belongs to the patatin family. Tuber.

It is found in the vacuole. Functionally, probable lipolytic acyl hydrolase (LAH), an activity which is thought to be involved in the response of tubers to pathogens. The chain is Patatin-07 from Solanum tuberosum (Potato).